Reading from the N-terminus, the 963-residue chain is Kinesin-1 heavy chain (963 aa).

Residue Ala-2 is modified to N-acetylalanine. A Kinesin motor domain is found at 8 to 325 (NIKVMCRFRP…LLFGQRAKTI (318 aa)). ATP is bound at residue 85 to 92 (GQTSSGKT). Residue Lys-213 forms a Glycyl lysine isopeptide (Lys-Gly) (interchain with G-Cter in SUMO2) linkage. Residues 329–914 (VCVNVELTAE…AVRSKNMARR (586 aa)) adopt a coiled-coil conformation. Residues 908–963 (SKNMARRGHSAQIAKPIRPGQHPAASPTHPGTVRGGGSFVQNNQPVGLRGGGGKQS) are disordered. The interval 915 to 963 (GHSAQIAKPIRPGQHPAASPTHPGTVRGGGSFVQNNQPVGLRGGGGKQS) is globular. Ser-933 and Ser-945 each carry phosphoserine. Arg-956 carries the post-translational modification Omega-N-methylarginine.

It belongs to the TRAFAC class myosin-kinesin ATPase superfamily. Kinesin family. Kinesin subfamily. As to quaternary structure, oligomer composed of two heavy chains and two light chains. Interacts with GRIP1 and PPP1R42. Interacts with SYBU. Interacts with JAKMIP1. Interacts with PLEKHM2. Interacts with ECPAS. Interacts with ZFYVE27. Found in a complex with OGT, RHOT1, RHOT2 and TRAK1. Interacts with APP (via cytoplasmic domain).

It is found in the cytoplasm. The protein localises to the cytoskeleton. The protein resides in the cytolytic granule membrane. It localises to the lysosome membrane. Its function is as follows. Microtubule-dependent motor required for normal distribution of mitochondria and lysosomes. May be involved in the mechanisms of growth arrest induced by exposure to DNA-damaging drugs or by cellular senescence. Can induce formation of neurite-like membrane protrusions in non-neuronal cells in a ZFYVE27-dependent manner. Regulates centrosome and nuclear positioning during mitotic entry. During the G2 phase of the cell cycle in a BICD2-dependent manner, antagonizes dynein function and drives the separation of nuclei and centrosomes. Required for anterograde axonal transportation of MAPK8IP3/JIP3 which is essential for MAPK8IP3/JIP3 function in axon elongation. Through binding with PLEKHM2 and ARL8B, directs lysosome movement toward microtubule plus ends. Involved in NK cell-mediated cytotoxicity. Drives the polarization of cytolytic granules and microtubule-organizing centers (MTOCs) toward the immune synapse between effector NK lymphocytes and target cells. The polypeptide is Kinesin-1 heavy chain (Kif5b) (Mus musculus (Mouse)).